The following is a 117-amino-acid chain: Ribonuclease P protein component (117 aa).

The protein belongs to the RnpA family. In terms of assembly, consists of a catalytic RNA component (M1 or rnpB) and a protein subunit.

The catalysed reaction is Endonucleolytic cleavage of RNA, removing 5'-extranucleotides from tRNA precursor.. Functionally, RNaseP catalyzes the removal of the 5'-leader sequence from pre-tRNA to produce the mature 5'-terminus. It can also cleave other RNA substrates such as 4.5S RNA. The protein component plays an auxiliary but essential role in vivo by binding to the 5'-leader sequence and broadening the substrate specificity of the ribozyme. The sequence is that of Ribonuclease P protein component from Lactococcus lactis subsp. lactis (strain IL1403) (Streptococcus lactis).